The following is a 284-amino-acid chain: 2-dehydro-3-deoxyphosphooctonate aldolase (284 aa).

Belongs to the KdsA family.

The protein localises to the cytoplasm. The catalysed reaction is D-arabinose 5-phosphate + phosphoenolpyruvate + H2O = 3-deoxy-alpha-D-manno-2-octulosonate-8-phosphate + phosphate. The protein operates within carbohydrate biosynthesis; 3-deoxy-D-manno-octulosonate biosynthesis; 3-deoxy-D-manno-octulosonate from D-ribulose 5-phosphate: step 2/3. Its pathway is bacterial outer membrane biogenesis; lipopolysaccharide biosynthesis. The polypeptide is 2-dehydro-3-deoxyphosphooctonate aldolase (Aliivibrio fischeri (strain ATCC 700601 / ES114) (Vibrio fischeri)).